Here is a 36-residue protein sequence, read N- to C-terminus: Conotoxin Bt11.4 (36 aa).

4 disulfides stabilise this stretch: Cys-2-Cys-16, Cys-9-Cys-21, Cys-15-Cys-26, and Cys-20-Cys-33.

This sequence belongs to the conotoxin I1 superfamily. In terms of tissue distribution, expressed by the venom duct.

The protein localises to the secreted. This Conus betulinus (Beech cone) protein is Conotoxin Bt11.4.